The following is a 254-amino-acid chain: Protein GltF (254 aa).

The first 25 residues, 1–25, serve as a signal peptide directing secretion; that stretch reads MFFKKNLTTAAICAALSVAAFSAMA. Residues 213–229 traverse the membrane as a helical segment; the sequence is PVAITAVTFPLLIDAAV.

It to E.coli YhcF.

It localises to the cell membrane. Involved in induction of the so-called NTR enzymes in response to nitrogen deprivation, as well as in glutamate biosynthesis. May mediate the glutamate-dependent repression of the GLT operon. This Escherichia coli (strain K12) protein is Protein GltF (gltF).